A 332-amino-acid chain; its full sequence is Adenosine deaminase (332 aa).

Residues histidine 12 and histidine 14 each contribute to the Zn(2+) site. Substrate is bound by residues histidine 14, aspartate 16, and glycine 170. Histidine 197 is a Zn(2+) binding site. Residue glutamate 200 is the Proton donor of the active site. Aspartate 278 is a binding site for Zn(2+). Residue aspartate 279 coordinates substrate.

Belongs to the metallo-dependent hydrolases superfamily. Adenosine and AMP deaminases family. Adenosine deaminase subfamily. Zn(2+) serves as cofactor.

The enzyme catalyses adenosine + H2O + H(+) = inosine + NH4(+). It catalyses the reaction 2'-deoxyadenosine + H2O + H(+) = 2'-deoxyinosine + NH4(+). Functionally, catalyzes the hydrolytic deamination of adenosine and 2-deoxyadenosine. The protein is Adenosine deaminase of Erwinia tasmaniensis (strain DSM 17950 / CFBP 7177 / CIP 109463 / NCPPB 4357 / Et1/99).